We begin with the raw amino-acid sequence, 1001 residues long: 26S proteasome non-ATPase regulatory subunit 1 homolog B (1001 aa).

Ala2 carries the N-acetylalanine modification. Lys166 is covalently cross-linked (Glycyl lysine isopeptide (Lys-Gly) (interchain with G-Cter in ubiquitin)). PC repeat units follow at residues 412–447 (SATA…GGSP), 452–485 (GALY…EVIQ), 487–521 (GACL…VAGE), 522–555 (AAGI…EKII), 557–590 (GLAL…IIRY), 591–626 (GGMY…DVRR), 627–659 (TAVL…PHVR), 661–695 (GAAL…FVRQ), 696–736 (GALI…DTMS), and 739–771 (GAIL…TAVI). Disordered regions lie at residues 853–896 (AKKE…TVEK) and 954–1001 (SLTD…YASP). Residues 854–863 (KKEAEQKAKA) show a composition bias toward basic and acidic residues. A Phosphoserine modification is found at Ser889. A compositionally biased stretch (low complexity) spans 961–985 (STASPAVGAEAAGQAQQAATTSAMA).

The protein belongs to the proteasome subunit S1 family. Component of the 19S regulatory particle (RP/PA700) base subcomplex of the 26S proteasome. The 26S proteasome is composed of a core protease (CP), known as the 20S proteasome, capped at one or both ends by the 19S regulatory particle (RP/PA700). The RP/PA700 complex is composed of at least 17 different subunits in two subcomplexes, the base and the lid, which form the portions proximal and distal to the 20S proteolytic core, respectively.

Functionally, acts as a regulatory subunit of the 26 proteasome which is involved in the ATP-dependent degradation of ubiquitinated proteins. This is 26S proteasome non-ATPase regulatory subunit 1 homolog B (RPN2B) from Arabidopsis thaliana (Mouse-ear cress).